The primary structure comprises 64 residues: Large ribosomal subunit protein bL35 (64 aa).

The segment covering 1-17 (MKQKTHSGIKKRIKKTG) has biased composition (basic residues). The interval 1–64 (MKQKTHSGIK…KRVNRLLGEG (64 aa)) is disordered. Over residues 21–33 (LRREQANRRHLLE) the composition is skewed to basic and acidic residues.

The protein belongs to the bacterial ribosomal protein bL35 family.

The polypeptide is Large ribosomal subunit protein bL35 (Corynebacterium kroppenstedtii (strain DSM 44385 / JCM 11950 / CIP 105744 / CCUG 35717)).